Consider the following 128-residue polypeptide: Cystatin-12 (128 aa).

Residues 1–21 (MLWKSVLPVALIVLGIHDCSF) form the signal peptide. Disulfide bonds link cysteine 82-cysteine 92 and cysteine 105-cysteine 125. Asparagine 122 carries an N-linked (GlcNAc...) asparagine glycan.

The protein belongs to the cystatin family.

It localises to the secreted. Its function is as follows. May play a specialized role in spermatogenesis. The chain is Cystatin-12 (Cst12) from Rattus norvegicus (Rat).